The following is a 75-amino-acid chain: UPF0270 protein PSPTO_1630 (75 aa).

It belongs to the UPF0270 family.

This is UPF0270 protein PSPTO_1630 from Pseudomonas syringae pv. tomato (strain ATCC BAA-871 / DC3000).